We begin with the raw amino-acid sequence, 509 residues long: tRNA-2-methylthio-N(6)-dimethylallyladenosine synthase (509 aa).

Residues 1–21 are disordered; the sequence is MNEKQKLESGQVHPSDKKSEK. An MTTase N-terminal domain is found at 66 to 184; that stretch reads RKFYIRTYGC…LPELLSEAYL (119 aa). Cys-75, Cys-111, Cys-145, Cys-221, Cys-225, and Cys-228 together coordinate [4Fe-4S] cluster. A Radical SAM core domain is found at 207-437; it reads RNGKIKGWVN…NALVNEISAK (231 aa). Residues 440 to 503 enclose the TRAM domain; that stretch reads KEYEGKVVEV…TWSLDGEMVG (64 aa).

It belongs to the methylthiotransferase family. MiaB subfamily. As to quaternary structure, monomer. It depends on [4Fe-4S] cluster as a cofactor.

It localises to the cytoplasm. The enzyme catalyses N(6)-dimethylallyladenosine(37) in tRNA + (sulfur carrier)-SH + AH2 + 2 S-adenosyl-L-methionine = 2-methylsulfanyl-N(6)-dimethylallyladenosine(37) in tRNA + (sulfur carrier)-H + 5'-deoxyadenosine + L-methionine + A + S-adenosyl-L-homocysteine + 2 H(+). It catalyses the reaction N(6)-dimethylallyladenosine(37) in tRNA + (sulfur carrier)-SH + AH2 + S-adenosyl-L-methionine = 2-thio-N(6)-dimethylallyladenosine(37) in tRNA + (sulfur carrier)-H + 5'-deoxyadenosine + L-methionine + A + H(+). It carries out the reaction 2-thio-N(6)-dimethylallyladenosine(37) in tRNA + S-adenosyl-L-methionine = 2-methylsulfanyl-N(6)-dimethylallyladenosine(37) in tRNA + S-adenosyl-L-homocysteine + H(+). Catalyzes the methylthiolation of N6-(dimethylallyl)adenosine (i(6)A), leading to the formation of 2-methylthio-N6-(dimethylallyl)adenosine (ms(2)i(6)A) at position 37 in tRNAs that read codons beginning with uridine. The protein is tRNA-2-methylthio-N(6)-dimethylallyladenosine synthase of Bacillus subtilis (strain 168).